The chain runs to 378 residues: Probable selenide, water dikinase (378 aa).

Cysteine 33 is an active-site residue. Residues lysine 36, glycine 63–aspartate 65, aspartate 83, aspartate 106, and glycine 158–threonine 160 contribute to the ATP site. Residue aspartate 65 participates in Mg(2+) binding. Aspartate 106 lines the Mg(2+) pocket. Aspartate 260 contributes to the Mg(2+) binding site.

This sequence belongs to the selenophosphate synthase 1 family. Class I subfamily. In terms of assembly, homodimer. The cofactor is Mg(2+).

The enzyme catalyses hydrogenselenide + ATP + H2O = selenophosphate + AMP + phosphate + 2 H(+). Synthesizes selenophosphate from selenide and ATP. The chain is Probable selenide, water dikinase (seld-1) from Caenorhabditis elegans.